Consider the following 140-residue polypeptide: Acyl-coenzyme A thioesterase 13 (140 aa).

Methionine 1 carries the post-translational modification N-acetylmethionine. An N-acetylthreonine; in Acyl-coenzyme A thioesterase 13, N-terminally processed modification is found at threonine 2. N6-acetyllysine is present on residues lysine 27, lysine 37, and lysine 43. Glutamate 46 serves as a coordination point for CoA. Substrate is bound by residues asparagine 50 and glycine 81. CoA is bound by residues serine 83, 90–95, and 108–113; these read YMSPAK and KQGKTL. Residues lysine 108 and lysine 127 each carry the N6-acetyllysine modification. Position 137 (histidine 137) interacts with CoA.

The protein belongs to the thioesterase PaaI family. In terms of assembly, homotetramer. Interacts with PCTP.

Its subcellular location is the cytoplasm. It localises to the cytosol. The protein localises to the mitochondrion. It is found in the nucleus. The protein resides in the cytoskeleton. Its subcellular location is the spindle. The enzyme catalyses a fatty acyl-CoA + H2O = a fatty acid + CoA + H(+). It catalyses the reaction decanoyl-CoA + H2O = decanoate + CoA + H(+). It carries out the reaction octanoyl-CoA + H2O = octanoate + CoA + H(+). The catalysed reaction is butanoyl-CoA + H2O = butanoate + CoA + H(+). The enzyme catalyses hexanoyl-CoA + H2O = hexanoate + CoA + H(+). It catalyses the reaction tetradecanoyl-CoA + H2O = tetradecanoate + CoA + H(+). It carries out the reaction hexadecanoyl-CoA + H2O = hexadecanoate + CoA + H(+). The catalysed reaction is dodecanoyl-CoA + H2O = dodecanoate + CoA + H(+). The enzyme catalyses (9Z)-octadecenoyl-CoA + H2O = (9Z)-octadecenoate + CoA + H(+). It catalyses the reaction (5Z,8Z,11Z,14Z)-eicosatetraenoyl-CoA + H2O = (5Z,8Z,11Z,14Z)-eicosatetraenoate + CoA + H(+). Its function is as follows. Catalyzes the hydrolysis of acyl-CoAs into free fatty acids and coenzyme A (CoASH), regulating their respective intracellular levels. Has acyl-CoA thioesterase activity towards medium (C12) and long-chain (C18) fatty acyl-CoA substrates. Can also hydrolyze 3-hydroxyphenylacetyl-CoA and 3,4-dihydroxyphenylacetyl-CoA (in vitro). May play a role in controlling adaptive thermogenesis. The polypeptide is Acyl-coenzyme A thioesterase 13 (Homo sapiens (Human)).